The sequence spans 230 residues: RNA polymerase sigma factor FliA (230 aa).

The interval L6–W78 is sigma-70 factor domain-2. An Interaction with polymerase core subunit RpoC motif is present at residues D33–Q36. The tract at residues N86–D156 is sigma-70 factor domain-3. A sigma-70 factor domain-4 region spans residues A175–R223. Positions L197–S216 form a DNA-binding region, H-T-H motif.

The protein belongs to the sigma-70 factor family. FliA subfamily.

It is found in the cytoplasm. Functionally, sigma factors are initiation factors that promote the attachment of RNA polymerase to specific initiation sites and are then released. This sigma factor controls the expression of flagella-related genes. In Yersinia enterocolitica, this protein is RNA polymerase sigma factor FliA.